We begin with the raw amino-acid sequence, 365 residues long: Sulfate/thiosulfate import ATP-binding protein CysA (365 aa).

One can recognise an ABC transporter domain in the interval 3–237; sequence IEIARIKKSF…PATRFVLEFM (235 aa). 35–42 serves as a coordination point for ATP; it reads GPSGSGKT.

It belongs to the ABC transporter superfamily. Sulfate/tungstate importer (TC 3.A.1.6) family. In terms of assembly, the complex is composed of two ATP-binding proteins (CysA), two transmembrane proteins (CysT and CysW) and a solute-binding protein (CysP).

The protein resides in the cell inner membrane. The enzyme catalyses sulfate(out) + ATP + H2O = sulfate(in) + ADP + phosphate + H(+). It carries out the reaction thiosulfate(out) + ATP + H2O = thiosulfate(in) + ADP + phosphate + H(+). Its function is as follows. Part of the ABC transporter complex CysAWTP involved in sulfate/thiosulfate import. Responsible for energy coupling to the transport system. The protein is Sulfate/thiosulfate import ATP-binding protein CysA of Salmonella typhimurium (strain LT2 / SGSC1412 / ATCC 700720).